Reading from the N-terminus, the 381-residue chain is Hps1-dma1 cluster transcription factor tfc7 (381 aa).

A DNA-binding region (zn(2)-C6 fungal-type) is located at residues 10–37; it reads CDHCSATKIKCTQERPQCTRCRALGRDC. Positions 41 to 88 are disordered; the sequence is RSLRAGKPPRSSQGLNRKISNAPVLPRQNTPVSNPTSMSSKPEHWPTM. Polar residues-rich tracts occupy residues 50-59 and 67-80; these read RSSQGLNRKI and RQNT…SMSS.

It is found in the nucleus. Its function is as follows. Transcription factor that regulates the expression of the hps1-dma1 gene cluster that probably mediates the biosynthesis a derivative of cyclopiazonic acid (CPA). Further studies are required to whether the CPA-like hps1-dma1 cluster is functional or a non-functional relic reflecting evolution of D.septosporum. In Dothistroma septosporum (strain NZE10 / CBS 128990) (Red band needle blight fungus), this protein is Hps1-dma1 cluster transcription factor tfc7 (tfc7).